Here is a 440-residue protein sequence, read N- to C-terminus: Chromosomal replication initiator protein DnaA (440 aa).

The interval 1–74 is domain I, interacts with DnaA modulators; the sequence is MNPSQILENL…VQSGNKAIIN (74 aa). Residues 74-99 are domain II; that stretch reads NIQAQSAKQSNKSTKIDIAHIKAQST. Residues 100–316 form a domain III, AAA+ region region; that stretch reads ILNPSFTFDS…GIIISLNAYA (217 aa). ATP is bound by residues G146, G148, K149, and T150. Positions 317-440 are domain IV, binds dsDNA; that stretch reads TILGQEITLE…KNKILVKSQS (124 aa).

This sequence belongs to the DnaA family. In terms of assembly, oligomerizes as a right-handed, spiral filament on DNA at oriC.

It is found in the cytoplasm. In terms of biological role, plays an essential role in the initiation and regulation of chromosomal replication. ATP-DnaA binds to the origin of replication (oriC) to initiate formation of the DNA replication initiation complex once per cell cycle. Binds the DnaA box (a 9 base pair repeat at the origin) and separates the double-stranded (ds)DNA. Forms a right-handed helical filament on oriC DNA; dsDNA binds to the exterior of the filament while single-stranded (ss)DNA is stabiized in the filament's interior. The ATP-DnaA-oriC complex binds and stabilizes one strand of the AT-rich DNA unwinding element (DUE), permitting loading of DNA polymerase. After initiation quickly degrades to an ADP-DnaA complex that is not apt for DNA replication. Binds acidic phospholipids. This is Chromosomal replication initiator protein DnaA from Campylobacter jejuni subsp. jejuni serotype O:23/36 (strain 81-176).